We begin with the raw amino-acid sequence, 101 residues long: Peroxisomal biogenesis factor 39 (101 aa).

The protein resides in the peroxisome. May be a peroxin involved in the PTS2-mediated protein import pathway. The protein is Peroxisomal biogenesis factor 39 of Homo sapiens (Human).